The primary structure comprises 352 residues: Thymidine kinase (352 aa).

Residue 26-33 (GSMGIGKT) coordinates ATP. The Proton acceptor role is filled by Glu54. Gln95 contacts substrate. Arg185 is an ATP binding site. Arg191 lines the substrate pocket.

Belongs to the herpesviridae thymidine kinase family. In terms of assembly, homodimer.

It catalyses the reaction thymidine + ATP = dTMP + ADP + H(+). In terms of biological role, catalyzes the transfer of the gamma-phospho group of ATP to thymidine to generate dTMP in the salvage pathway of pyrimidine synthesis. The dTMP serves as a substrate for DNA polymerase during viral DNA replication. Allows the virus to be reactivated and to grow in non-proliferative cells lacking a high concentration of phosphorylated nucleic acid precursors. The sequence is that of Thymidine kinase from Gallus gallus (Chicken).